The primary structure comprises 373 residues: Muconate cycloisomerase 1 (373 aa).

Lysine 169 is an active-site residue. Lysine 169 functions as the Proton acceptor in the catalytic mechanism. Mn(2+) is bound by residues aspartate 198, glutamate 224, and aspartate 249. Residue glutamate 327 is the Proton donor of the active site.

The protein belongs to the mandelate racemase/muconate lactonizing enzyme family. It depends on Mn(2+) as a cofactor.

The enzyme catalyses (S)-muconolactone = cis,cis-muconate + H(+). This is Muconate cycloisomerase 1 (catB) from Rhodococcus opacus (Nocardia opaca).